A 248-amino-acid polypeptide reads, in one-letter code: Tyrosine recombinase XerD-like (248 aa).

The Core-binding (CB) domain occupies 1 to 72 (MKSYIEPFIA…TANQFLYYLY (72 aa)). The Tyr recombinase domain maps to 85–248 (DTMKVMRTEK…PVTLEKYYKS (164 aa)). Active-site residues include Lys-149 and Arg-213. Tyr-245 (O-(3'-phospho-DNA)-tyrosine intermediate) is an active-site residue.

The protein belongs to the 'phage' integrase family. XerD-like subfamily.

It localises to the cytoplasm. In terms of biological role, putative tyrosine recombinase. Not involved in the cutting and rejoining of the recombining DNA molecules on dif(SL) site. In Streptococcus pyogenes serotype M3 (strain ATCC BAA-595 / MGAS315), this protein is Tyrosine recombinase XerD-like.